The chain runs to 482 residues: Interferon-induced protein with tetratricopeptide repeats 5 (482 aa).

TPR repeat units follow at residues 51 to 84 (LALY…IQQE), 94 to 127 (LVTW…CKKL), 138 to 173 (PETD…EPDN), 181 to 214 (AITV…NPDN), 249 to 282 (PYVL…TPTS), 338 to 371 (AFAY…ENIT), 376 to 410 (HQIH…KDRS), and 435 to 468 (VQSL…DPEN). Residues 254–260 (YAAKFYR) form an interaction with the 5'-triphosphate group of PPP-RNA region.

The protein belongs to the IFIT family. Monomer. Interacts with MAP3K7 and the components of the IKK core complex CHUK, IKBKB and IKBKG; the interaction synergizes the recruitment of IKK to MAP3K7 and enhances IKK phosphorylation.

It localises to the cell projection. The protein localises to the ruffle membrane. In terms of biological role, interferon-induced RNA-binding protein involved in the human innate immune response. Has a broad and adaptable RNA structure recognition important for RNA recognition specificity in antiviral defense. Binds precursor and processed tRNAs as well as poly-U-tailed tRNA fragments. Specifically binds single-stranded RNA bearing a 5'-triphosphate group (PPP-RNA), thereby acting as a sensor of viral single-stranded RNAs. Single-stranded PPP-RNAs, which lack 2'-O-methylation of the 5' cap and bear a 5'-triphosphate group instead, are specific from viruses, providing a molecular signature to distinguish between self and non-self mRNAs by the host during viral infection. Directly binds PPP-RNA in a non-sequence-specific manner. Also recognizes and selectively binds AT-rich dsDNA. Additionally, as a mediator in innate immunity, positively regulates IKK-NFKB signaling by sinergizing the recruitment of IKK to MAP3K7. This is Interferon-induced protein with tetratricopeptide repeats 5 (IFIT5) from Homo sapiens (Human).